We begin with the raw amino-acid sequence, 306 residues long: Phenylcoumaran benzylic ether reductase POP1 (306 aa).

Residues 9-15 (GGTGYIG), Arg-34, and Lys-43 contribute to the NADP(+) site. The Proton acceptor role is filled by Lys-131. Residue Arg-135 coordinates NADP(+).

The protein belongs to the NmrA-type oxidoreductase family. Isoflavone reductase subfamily.

It catalyses the reaction (-)-dehydrodiconiferyl alcohol + NADPH + H(+) = (S)-isodihydrodehydrodiconiferyl alcohol + NADP(+). The enzyme catalyses (+)-dehydrodiconiferyl alcohol + NADPH + H(+) = (R)-isodihydrodehydrodiconiferyl alcohol + NADP(+). It carries out the reaction (2R,3S)-dihydrodehydrodiconiferyl alcohol + NADPH + H(+) = (S)-tetrahydrodehydrodiconiferyl alcohol + NADP(+). The catalysed reaction is (2S,3R)-dihydrodehydrodiconiferyl alcohol + NADPH + H(+) = (R)-tetrahydrodehydrodiconiferyl alcohol + NADP(+). Oxidoreductase involved in lignan biosynthesis. Catalyzes the NADPH-dependent reduction of phenylcoumaran benzylic ethers. Converts dehydrodiconiferyl alcohol (DDC) to isodihydrodehydrodiconiferyl alcohol (IDDDC), and dihydrodehydrodiconiferyl alcohol (DDDC) to tetrahydrodehydrodiconiferyl alcohol (TDDC). This Populus trichocarpa (Western balsam poplar) protein is Phenylcoumaran benzylic ether reductase POP1.